The following is a 193-amino-acid chain: tRNA(Phe) 7-((3-amino-3-carboxypropyl)-4-demethylwyosine(37)-N(4))-methyltransferase (193 aa).

The protein belongs to the TYW3 family.

It carries out the reaction 4-demethyl-7-[(3S)-3-amino-3-carboxypropyl]wyosine(37) in tRNA(Phe) + S-adenosyl-L-methionine = 7-[(3S)-3-amino-3-carboxypropyl]wyosine(37) in tRNA(Phe) + S-adenosyl-L-homocysteine + H(+). Its function is as follows. S-adenosyl-L-methionine-dependent methyltransferase that acts as a component of the wyosine derivatives biosynthesis pathway. Probably methylates N-4 position of wybutosine-86 to produce wybutosine-72. The chain is tRNA(Phe) 7-((3-amino-3-carboxypropyl)-4-demethylwyosine(37)-N(4))-methyltransferase from Methanocaldococcus jannaschii (strain ATCC 43067 / DSM 2661 / JAL-1 / JCM 10045 / NBRC 100440) (Methanococcus jannaschii).